Reading from the N-terminus, the 344-residue chain is Nuclear distribution protein nudE homolog 1 (344 aa).

The segment at 1 to 93 (MEDSGKTFES…MQHSEGYRQI (93 aa)) is self-association. A coiled-coil region spans residues 18-188 (WRDLAMTYKQ…ELAVQQKQDK (171 aa)). Residues 88–156 (EGYRQISALE…ERNAFLESEL (69 aa)) form an interaction with PAFAH1B1 region. An interaction with CENPF region spans residues 167–290 (QRLKDEARDL…QSPSRTSGPA (124 aa)). Residues 181–246 (AVQQKQDKPR…DSSTSGTPLT (66 aa)) are disordered. At serine 211 the chain carries Phosphoserine. 2 positions are modified to phosphothreonine: threonine 215 and threonine 228. Residue serine 239 is modified to Phosphoserine. Phosphothreonine is present on residues threonine 243 and threonine 246. Residue cysteine 274 is the site of S-palmitoyl cysteine; by ZDHHC2, ZDHHC3 and ZDHHC7 attachment. The span at 279-289 (YDQSPSRTSGP) shows a compositional bias: polar residues. Residues 279-337 (YDQSPSRTSGPASGRGTKNRDGVDRRPGSTSVGDKGSGKRLEFGKPASEPASPALPSAQ) are disordered. Residue serine 282 is modified to Phosphoserine. Positions 296–305 (KNRDGVDRRP) are enriched in basic and acidic residues. Phosphoserine is present on serine 309. The segment covering 324–336 (PASEPASPALPSA) has biased composition (low complexity).

The protein belongs to the nudE family. Homodimer. Interacts with dynactin and PCM1. Interacts with CENPF, LIS1, CNTRL, dynein, tubulin gamma, PAFAH1B1, PCNT, SLMAP and TCP1. Interacts with ZNF365. Interacts with RAB9A; the interaction leads to RAB9A-dynein motor tethering. Interacts (via C-terminus) with MCRS1 (via C-terminus); phosphorylation of NDE1 inhibits the interaction. Post-translationally, phosphorylated in mitosis. Phosphorylation at Thr-246 is essential for the G2/M transition. Highly expressed in ovary. Also expressed in brain, heart, kidney, large intestine, liver, lung, small intestine and testis.

It localises to the cytoplasm. The protein localises to the cytoskeleton. The protein resides in the microtubule organizing center. It is found in the centrosome. Its subcellular location is the spindle. It localises to the chromosome. The protein localises to the centromere. The protein resides in the kinetochore. It is found in the cleavage furrow. Its subcellular location is the cytoplasmic vesicle membrane. Required for centrosome duplication and formation and function of the mitotic spindle. Essential for the development of the cerebral cortex. May regulate the production of neurons by controlling the orientation of the mitotic spindle during division of cortical neuronal progenitors of the proliferative ventricular zone of the brain. Orientation of the division plane perpendicular to the layers of the cortex gives rise to two proliferative neuronal progenitors whereas parallel orientation of the division plane yields one proliferative neuronal progenitor and a postmitotic neuron. A premature shift towards a neuronal fate within the progenitor population may result in an overall reduction in the final number of neurons and an increase in the number of neurons in the deeper layers of the cortex. Acts as a RAB9A/B effector that tethers RAB9-associated late endosomes to the dynein motor for their retrograde transport to the trans-Golgi network. The polypeptide is Nuclear distribution protein nudE homolog 1 (Mus musculus (Mouse)).